A 483-amino-acid polypeptide reads, in one-letter code: ATP synthase subunit beta (483 aa).

169–176 lines the ATP pocket; that stretch reads GGAGVGKT.

Belongs to the ATPase alpha/beta chains family. F-type ATPases have 2 components, CF(1) - the catalytic core - and CF(0) - the membrane proton channel. CF(1) has five subunits: alpha(3), beta(3), gamma(1), delta(1), epsilon(1). CF(0) has three main subunits: a(1), b(2) and c(9-12). The alpha and beta chains form an alternating ring which encloses part of the gamma chain. CF(1) is attached to CF(0) by a central stalk formed by the gamma and epsilon chains, while a peripheral stalk is formed by the delta and b chains.

It is found in the cell membrane. The catalysed reaction is ATP + H2O + 4 H(+)(in) = ADP + phosphate + 5 H(+)(out). Its function is as follows. Produces ATP from ADP in the presence of a proton gradient across the membrane. The catalytic sites are hosted primarily by the beta subunits. In Corynebacterium glutamicum (strain ATCC 13032 / DSM 20300 / JCM 1318 / BCRC 11384 / CCUG 27702 / LMG 3730 / NBRC 12168 / NCIMB 10025 / NRRL B-2784 / 534), this protein is ATP synthase subunit beta.